Reading from the N-terminus, the 225-residue chain is Elongation factor 1-beta (225 aa).

Residues 2–90 (GFGDLKTPAG…PSSVEDTTGS (89 aa)) enclose the GST C-terminal domain. K7 carries the N6-acetyllysine modification. S42 and S83 each carry phosphoserine. A disordered region spans residues 73 to 115 (KKSLGKYGPSSVEDTTGSGAADAKDDDDIDLFGSDDEEESEEA). T88 carries the post-translational modification Phosphothreonine. The span at 96–113 (KDDDDIDLFGSDDEEESE) shows a compositional bias: acidic residues. S106 carries the phosphoserine modification. Residue K147 forms a Glycyl lysine isopeptide (Lys-Gly) (interchain with G-Cter in SUMO2) linkage. S174 is subject to Phosphoserine.

This sequence belongs to the EF-1-beta/EF-1-delta family. EF-1 is composed of 4 subunits: alpha, beta (alpha subunit of the eEF1B subcomplex), delta (beta subunit of the eEF1B subcomplex), and gamma (gamma subunit of the eEF1B subcomplex). Interacts with elongation factor EEF1A1. Post-translationally, phosphorylation affects the GDP/GTP exchange rate.

In terms of biological role, catalytic subunit of the guanine nucleotide exchange factor (GEF) (eEF1B subcomplex) of the eukaryotic elongation factor 1 complex (eEF1). Stimulates the exchange of GDP for GTP on elongation factor 1A (eEF1A), probably by displacing GDP from the nucleotide binding pocket in eEF1A. The protein is Elongation factor 1-beta (Eef1b) of Mus musculus (Mouse).